The primary structure comprises 303 residues: Sulfate adenylyltransferase subunit 2 (303 aa).

Belongs to the PAPS reductase family. CysD subfamily. In terms of assembly, heterodimer composed of CysD, the smaller subunit, and CysN.

It carries out the reaction sulfate + ATP + H(+) = adenosine 5'-phosphosulfate + diphosphate. It functions in the pathway sulfur metabolism; hydrogen sulfide biosynthesis; sulfite from sulfate: step 1/3. Its function is as follows. With CysN forms the ATP sulfurylase (ATPS) that catalyzes the adenylation of sulfate producing adenosine 5'-phosphosulfate (APS) and diphosphate, the first enzymatic step in sulfur assimilation pathway. APS synthesis involves the formation of a high-energy phosphoric-sulfuric acid anhydride bond driven by GTP hydrolysis by CysN coupled to ATP hydrolysis by CysD. This is Sulfate adenylyltransferase subunit 2 from Aliarcobacter butzleri (strain RM4018) (Arcobacter butzleri).